A 634-amino-acid chain; its full sequence is MSTEFVFVDHQAAQASVRQKPKLSRRRGACENCKRRKVRCSGANPCEQCLKVNVHCWYIGNNQSRRRSVPNSGADKNNQQGDTDRHNGARLGLESFGHLHFFSESFLDAQSIPMDQPPGSSPVMDFDPYDYDASPLSMSNEQTALIDWDQLEATSNYVALGISANSGNNFIADQCFSETRTATNRASKDPLNGGCHNTLHTGEFTHDSRTVDELLNDSIPLAFAASTKSSLSFDYVRSSLHSWLLTAMTELDGDENRHILQTFERLLNANSPVIRHPSLNEDVNSIEILNSLRSESSQNRALVYRCIDACFSNPNRVGIFLDRMTVEELVCQVLAHPFVSSPISIALCLSFLAVGSRDLSLDDDCREMNAMNLFRTALYIRPNPSSGPSLWTFQALLLMAHFSCDIGAESTTSLMTDTATCVQALRLHSSAAISNLCSSDSERVNLKRAFWTFFAVEKLHCIQEGLFPLIHGEYADHKVAAPQDPLCRRYDCLYSDVGYAKICSKILQQLQGQQDISQVGSSCCGRESYKQSPAFTANRLETMLMEWKGNLPFDGDGKNIFTATSPGERRIRLTCINMYHFAMIAIHSLPGVEDTDASKRQRCESAREILDMSEHITSADLLYDWSVPPLCPDC.

The segment at residues 30–56 (CENCKRRKVRCSGANPCEQCLKVNVHC) is a DNA-binding region (zn(2)-C6 fungal-type). The disordered stretch occupies residues 66–89 (RRSVPNSGADKNNQQGDTDRHNGA). A compositionally biased stretch (polar residues) spans 69–81 (VPNSGADKNNQQG).

The protein resides in the nucleus. Functionally, transcription factor that regulates the expression of the gene cluster that mediates the biosynthesis of AAL-toxins, sphinganine-analog mycotoxins responsible for Alternaria stem canker on tomato by the tomato pathotype. The sequence is that of AAl-toxin cluster-specific transcription factor ALT13 from Alternaria alternata (Alternaria rot fungus).